The sequence spans 118 residues: Urease subunit beta (118 aa).

The protein belongs to the urease beta subunit family. In terms of assembly, heterotrimer of UreA (gamma), UreB (beta) and UreC (alpha) subunits. Three heterotrimers associate to form the active enzyme.

The protein resides in the cytoplasm. It catalyses the reaction urea + 2 H2O + H(+) = hydrogencarbonate + 2 NH4(+). It functions in the pathway nitrogen metabolism; urea degradation; CO(2) and NH(3) from urea (urease route): step 1/1. The polypeptide is Urease subunit beta (Aliivibrio fischeri (strain MJ11) (Vibrio fischeri)).